Reading from the N-terminus, the 469-residue chain is Bifunctional protein GlmU (469 aa).

The pyrophosphorylase stretch occupies residues 1 to 236 (MLNIKLNIVI…ISEINGINDC (236 aa)). Residues 11–14 (LAAG), Lys-25, Gln-83, 88–89 (GT), 110–112 (YGD), Gly-147, Glu-161, Asn-176, and Asn-234 contribute to the UDP-N-acetyl-alpha-D-glucosamine site. Residue Asp-112 participates in Mg(2+) binding. Residue Asn-234 participates in Mg(2+) binding. Residues 237-257 (AQLANLERLYQKEQAESLLRI) are linker. An N-acetyltransferase region spans residues 258-469 (GVIIADPNRF…KKKIRYNIIY (212 aa)). UDP-N-acetyl-alpha-D-glucosamine-binding residues include Arg-340 and Lys-358. The Proton acceptor role is filled by His-370. Residues Tyr-373 and Asn-384 each contribute to the UDP-N-acetyl-alpha-D-glucosamine site. Acetyl-CoA-binding positions include Ala-387, 393-394 (NY), Ser-412, Ala-430, and Arg-447.

The protein in the N-terminal section; belongs to the N-acetylglucosamine-1-phosphate uridyltransferase family. It in the C-terminal section; belongs to the transferase hexapeptide repeat family. In terms of assembly, homotrimer. The cofactor is Mg(2+).

It localises to the cytoplasm. The enzyme catalyses alpha-D-glucosamine 1-phosphate + acetyl-CoA = N-acetyl-alpha-D-glucosamine 1-phosphate + CoA + H(+). The catalysed reaction is N-acetyl-alpha-D-glucosamine 1-phosphate + UTP + H(+) = UDP-N-acetyl-alpha-D-glucosamine + diphosphate. It participates in nucleotide-sugar biosynthesis; UDP-N-acetyl-alpha-D-glucosamine biosynthesis; N-acetyl-alpha-D-glucosamine 1-phosphate from alpha-D-glucosamine 6-phosphate (route II): step 2/2. The protein operates within nucleotide-sugar biosynthesis; UDP-N-acetyl-alpha-D-glucosamine biosynthesis; UDP-N-acetyl-alpha-D-glucosamine from N-acetyl-alpha-D-glucosamine 1-phosphate: step 1/1. It functions in the pathway bacterial outer membrane biogenesis; LPS lipid A biosynthesis. Functionally, catalyzes the last two sequential reactions in the de novo biosynthetic pathway for UDP-N-acetylglucosamine (UDP-GlcNAc). The C-terminal domain catalyzes the transfer of acetyl group from acetyl coenzyme A to glucosamine-1-phosphate (GlcN-1-P) to produce N-acetylglucosamine-1-phosphate (GlcNAc-1-P), which is converted into UDP-GlcNAc by the transfer of uridine 5-monophosphate (from uridine 5-triphosphate), a reaction catalyzed by the N-terminal domain. This is Bifunctional protein GlmU from Baumannia cicadellinicola subsp. Homalodisca coagulata.